A 1756-amino-acid chain; its full sequence is Periplakin (1756 aa).

Position 14 is a phosphoserine (serine 14). Coiled coils occupy residues 16–125 (TVQT…KQIY) and 188–389 (KEQN…QQVV). Spectrin repeat units follow at residues 216–317 (QDYM…SHLK), 323–485 (HQFH…RTLQ), 505–612 (RQLL…EKVD), and 733–861 (EHFH…QNLE). Residues 399–455 (LKPIPVEALCDFEGEQGLISRGYSYTLQKNNGESWELMDSAGNKLIAPAVCFVIPPT) form the SH3 domain. Residue serine 465 is modified to Phosphoserine. Coiled coils occupy residues 585 to 820 (LLRT…GRRS) and 886 to 1645 (DSGV…SVAV). 4 positions are modified to phosphoserine: serine 887, serine 949, serine 1584, and serine 1657. Residues 1557–1756 (ELDFLREENH…ELAVLVSGQK (200 aa)) are interacts with BFSP2 and VIM. Plectin repeat units lie at residues 1651 to 1685 (ENHL…WNMF) and 1700 to 1735 (VKGP…PAQY).

It belongs to the plakin or cytolinker family. Homodimer or a heterodimer with EVPL. Found in a complex composed of PPL (via C-terminal linker domain), BFSP1 and BFSP2 in the retinal lens. Within the complex interacts (via C-terminal linker domain) with BFSP2. Interacts with VIM. Binds to the PH domain of AKT1. Interacts with FCGR1A. May interact with PPHLN1. Expressed in stratified squamous epithelia and in some other epithelia.

The protein resides in the cell junction. Its subcellular location is the desmosome. It is found in the cytoplasm. It localises to the cytoskeleton. The protein localises to the cell membrane. Its function is as follows. Component of the cornified envelope of keratinocytes. May link the cornified envelope to desmosomes and intermediate filaments. May act as a localization signal in PKB/AKT-mediated signaling. This chain is Periplakin (PPL), found in Homo sapiens (Human).